Here is a 259-residue protein sequence, read N- to C-terminus: Glutamate racemase (259 aa).

Residues 7–8 and 39–40 each bind substrate; these read DS and YG. Cys-70 (proton donor/acceptor) is an active-site residue. 71–72 is a binding site for substrate; it reads NT. Cys-180 acts as the Proton donor/acceptor in catalysis. 181–182 provides a ligand contact to substrate; the sequence is TH.

It belongs to the aspartate/glutamate racemases family.

It catalyses the reaction L-glutamate = D-glutamate. It functions in the pathway cell wall biogenesis; peptidoglycan biosynthesis. Its function is as follows. Provides the (R)-glutamate required for cell wall biosynthesis. The polypeptide is Glutamate racemase (Persephonella marina (strain DSM 14350 / EX-H1)).